Consider the following 145-residue polypeptide: Ribonuclease HI (145 aa).

In terms of domain architecture, RNase H type-1 spans 1–142; it reads MNQTVYLYTD…ADDLANRGAA (142 aa). 4 residues coordinate Mg(2+): aspartate 10, glutamate 48, aspartate 70, and aspartate 134.

This sequence belongs to the RNase H family. Monomer. It depends on Mg(2+) as a cofactor.

It is found in the cytoplasm. It carries out the reaction Endonucleolytic cleavage to 5'-phosphomonoester.. Its function is as follows. Endonuclease that specifically degrades the RNA of RNA-DNA hybrids. This chain is Ribonuclease HI, found in Neisseria meningitidis serogroup A / serotype 4A (strain DSM 15465 / Z2491).